The sequence spans 356 residues: Heparan sulfate 2-O-sulfotransferase 1 (356 aa).

Over Met1–Lys11 the chain is Cytoplasmic. The chain crosses the membrane as a helical; Signal-anchor for type II membrane protein span at residues Leu12–Glu28. Residues Met24–Arg51 adopt a coiled-coil conformation. Residues Asn29–Asn356 are Lumenal-facing. The adenosine 3',5'-bisphosphate site is built by Lys83, Thr84, Ala85, Ser86, Thr87, and Ser88. Asn108 and Asn127 each carry an N-linked (GlcNAc...) asparagine glycan. Catalysis depends on residues His140 and His142. Arg164 and Ser172 together coordinate adenosine 3',5'-bisphosphate. Disulfide bonds link Cys201–Cys209 and Cys222–Cys228. Adenosine 3',5'-bisphosphate-binding residues include Tyr279, Ser285, Thr290, and Lys293.

It belongs to the sulfotransferase 3 family. Homotrimer. Interacts with the C5-epimerase GLCE. Post-translationally, N-glycosylated.

It localises to the golgi apparatus membrane. Functionally, catalyzes the transfer of a sulfo group from 3'-phospho-5'-adenylyl sulfate (PAPS) to the 2-OH position of iduronic acid (IdoA) or glucuronic acid (GlcA) within the heparan sulfate (HS) chain and participates in HS biosynthesis. Required for metanephric development of kidney formation, suggesting that 2-O-sulfation within HS is essential for signaling between ureteric bud and metanephric mesenchyme. This chain is Heparan sulfate 2-O-sulfotransferase 1, found in Cricetulus griseus (Chinese hamster).